The following is a 154-amino-acid chain: Myoglobin (154 aa).

Residues 2-148 (ELSDQEWKHV…FRNDMASKYK (147 aa)) form the Globin domain. H65 is a nitrite binding site. H65 serves as a coordination point for O2. Heme b is bound at residue H94.

This sequence belongs to the globin family. As to quaternary structure, monomeric.

It localises to the cytoplasm. The protein localises to the sarcoplasm. It carries out the reaction Fe(III)-heme b-[protein] + nitric oxide + H2O = Fe(II)-heme b-[protein] + nitrite + 2 H(+). It catalyses the reaction H2O2 + AH2 = A + 2 H2O. In terms of biological role, monomeric heme protein which primary function is to store oxygen and facilitate its diffusion within muscle tissues. Reversibly binds oxygen through a pentacoordinated heme iron and enables its timely and efficient release as needed during periods of heightened demand. Depending on the oxidative conditions of tissues and cells, and in addition to its ability to bind oxygen, it also has a nitrite reductase activity whereby it regulates the production of bioactive nitric oxide. Under stress conditions, like hypoxia and anoxia, it also protects cells against reactive oxygen species thanks to its pseudoperoxidase activity. In Alligator mississippiensis (American alligator), this protein is Myoglobin (MB).